The chain runs to 433 residues: V-type ATP synthase beta chain (433 aa).

Belongs to the ATPase alpha/beta chains family.

Its function is as follows. Produces ATP from ADP in the presence of a proton gradient across the membrane. The V-type beta chain is a regulatory subunit. The chain is V-type ATP synthase beta chain from Borrelia turicatae (strain 91E135).